The sequence spans 433 residues: UDP-N-acetylglucosamine 1-carboxyvinyltransferase (433 aa).

34–35 (KN) contributes to the phosphoenolpyruvate binding site. Residue R104 coordinates UDP-N-acetyl-alpha-D-glucosamine. Residue C128 is the Proton donor of the active site. C128 is modified (2-(S-cysteinyl)pyruvic acid O-phosphothioketal). The UDP-N-acetyl-alpha-D-glucosamine site is built by D320 and I342.

This sequence belongs to the EPSP synthase family. MurA subfamily.

It is found in the cytoplasm. The enzyme catalyses phosphoenolpyruvate + UDP-N-acetyl-alpha-D-glucosamine = UDP-N-acetyl-3-O-(1-carboxyvinyl)-alpha-D-glucosamine + phosphate. The protein operates within cell wall biogenesis; peptidoglycan biosynthesis. In terms of biological role, cell wall formation. Adds enolpyruvyl to UDP-N-acetylglucosamine. This is UDP-N-acetylglucosamine 1-carboxyvinyltransferase from Synechococcus sp. (strain CC9605).